A 684-amino-acid polypeptide reads, in one-letter code: NAD(P)H-quinone oxidoreductase subunit 5, chloroplastic (684 aa).

14 helical membrane-spanning segments follow: residues 16–36, 65–85, 96–116, 123–143, 161–181, 206–226, 234–254, 256–276, 303–323, 330–350, 372–392, 401–421, 524–544, and 583–603; these read WAFP…XLSI, IDPL…MVLI, GYLI…GLVT, IYIF…FWFT, GDFG…SFEF, AALL…HVWL, TPIS…FLVA, LLPL…IGII, LXYM…FHLI, ALLF…VGYS, TSFL…CFWS, WLYS…TAFY, LFPL…GIPF, and IFSV…YKPI.

Belongs to the complex I subunit 5 family. In terms of assembly, NDH is composed of at least 16 different subunits, 5 of which are encoded in the nucleus.

It localises to the plastid. The protein localises to the chloroplast thylakoid membrane. It catalyses the reaction a plastoquinone + NADH + (n+1) H(+)(in) = a plastoquinol + NAD(+) + n H(+)(out). The catalysed reaction is a plastoquinone + NADPH + (n+1) H(+)(in) = a plastoquinol + NADP(+) + n H(+)(out). Its function is as follows. NDH shuttles electrons from NAD(P)H:plastoquinone, via FMN and iron-sulfur (Fe-S) centers, to quinones in the photosynthetic chain and possibly in a chloroplast respiratory chain. The immediate electron acceptor for the enzyme in this species is believed to be plastoquinone. Couples the redox reaction to proton translocation, and thus conserves the redox energy in a proton gradient. This is NAD(P)H-quinone oxidoreductase subunit 5, chloroplastic (ndhF) from Sesamum indicum (Oriental sesame).